Here is a 327-residue protein sequence, read N- to C-terminus: Cyclic AMP-responsive element-binding protein 1 (327 aa).

Disordered stretches follow at residues 1 to 26 (MTME…QQMT) and 94 to 113 (SEDS…RREI). Positions 87–146 (QISTIAESEDSQESVDSVTDSQKRREILSRRPSYRKILNDLSSDAPGVPRIEEEKSEEET) constitute a KID domain. Residue serine 119 is modified to Phosphoserine; by CaMK1, CaMK2, CaMK4, PKB/AKT1 or PKB/AKT2, RPS6KA3, RPS6KA4, RPS6KA5, SGK1 and TSSK4. Residue lysine 122 forms a Glycyl lysine isopeptide (Lys-Gly) (interchain with G-Cter in SUMO2) linkage. A disordered region spans residues 125–148 (NDLSSDAPGVPRIEEEKSEEETSA). The residue at position 128 (serine 128) is a Phosphoserine. Serine 257 carries the phosphoserine; by HIPK2 modification. A bZIP domain is found at 269–327 (ARKREVRLMKNREAARECRRKKKEYVKCLENRVAVLENQNKTLIEELKALKDLYCHKSD). Residues 270–295 (RKREVRLMKNREAARECRRKKKEYVK) are basic motif. Residues lysine 271 and lysine 290 each participate in a glycyl lysine isopeptide (Lys-Gly) (interchain with G-Cter in SUMO1) cross-link. Positions 297-318 (LENRVAVLENQNKTLIEELKAL) are leucine-zipper.

This sequence belongs to the bZIP family. As to quaternary structure, interacts with PPRC1. Binds DNA as a dimer. This dimer is stabilized by magnesium ions. Interacts, through the bZIP domain, with the coactivators CRTC1/TORC1, CRTC2/TORC2 and CRTC3/TORC3. When phosphorylated on Ser-119, binds CREBBP. Interacts with CREBL2; regulates CREB1 phosphorylation, stability and transcriptional activity. Interacts (phosphorylated form) with TOX3. Interacts with ARRB1. Binds to HIPK2. Interacts with SGK1. Interacts with TSSK4; this interaction facilitates phosphorylation on Ser-119. Forms a complex with KMT2A and CREBBP. Interacts with TOX4; CREB1 is required for full induction of TOX4-dependent activity and the interaction is increased by cAMP and inhibited by insulin. In terms of assembly, (Microbial infection) Interacts with hepatitis B virus/HBV protein X. (Microbial infection) Interacts with HTLV-1 protein Tax. Post-translationally, stimulated by phosphorylation. Phosphorylation of both Ser-119 and Ser-128 in the SCN regulates the activity of CREB and participates in circadian rhythm generation. Phosphorylation of Ser-119 allows CREBBP binding. In liver, phosphorylation is induced by fasting or glucagon in a circadian fashion. CREBL2 positively regulates phosphorylation at Ser-119 thereby stimulating CREB1 transcriptional activity. Phosphorylated upon calcium influx by CaMK4 and CaMK2 on Ser-119. CaMK4 is much more potent than CaMK2 in activating CREB. Phosphorylated by CaMK2 on Ser-128. Phosphorylation of Ser-128 blocks CREB-mediated transcription even when Ser-119 is phosphorylated. Phosphorylated by CaMK1. Phosphorylation of Ser-257 by HIPK2 in response to genotoxic stress promotes CREB1 activity, facilitating the recruitment of the coactivator CBP. Phosphorylated at Ser-119 by RPS6KA3, RPS6KA4 and RPS6KA5 in response to mitogenic or stress stimuli. Phosphorylated by TSSK4 on Ser-119. Sumoylated with SUMO1. Sumoylation on Lys-290, but not on Lys-271, is required for nuclear localization of this protein. Sumoylation is enhanced under hypoxia, promoting nuclear localization and stabilization.

The protein localises to the nucleus. Functionally, phosphorylation-dependent transcription factor that stimulates transcription upon binding to the DNA cAMP response element (CRE), a sequence present in many viral and cellular promoters. Transcription activation is enhanced by the TORC coactivators which act independently of Ser-119 phosphorylation. Involved in different cellular processes including the synchronization of circadian rhythmicity and the differentiation of adipose cells. Regulates the expression of apoptotic and inflammatory response factors in cardiomyocytes in response to ERFE-mediated activation of AKT signaling. The chain is Cyclic AMP-responsive element-binding protein 1 (CREB1) from Homo sapiens (Human).